Reading from the N-terminus, the 455-residue chain is Putative FBD-associated F-box protein At5g56400 (455 aa).

An F-box domain is found at 32 to 81 (VDKISDLPEDLLVHILSLLPTTNDIVATSGVSKRWESLWTKVHKLRFNDR). One can recognise an FBD domain in the interval 372–421 (WNQQPSYVPECLTKSLEIFEWRNYKATFRERDVAVYILKNSTCLKKTVIS).

The sequence is that of Putative FBD-associated F-box protein At5g56400 from Arabidopsis thaliana (Mouse-ear cress).